The sequence spans 1142 residues: MLLSCRHGASSPKLDNLVPSGKMKILLVFLGLLCYSAAMPMQMPRMPGFSSKSEEMMRYGHFNFMNAPHMAHLGTLYGNGMQLPQFFPQYQMPMWPQPPPNKKHPQKPSASKQQSKTDPAPESQKPNQPQPKTPTPKQPLNEPSPTPTQPEEETQTPQAFPPFGNGLFPYQQPLWHVPHRIPPGYGRPPTSNEEGGNPYFGFFGYHGFGGRPPYYSEEMFEQDFEKPKEKDPPKTETPATEPSVNTTVPETNSTQPNAPNPRGNDTSPTGTSGQGPNPRSNPTGQNGPAVNVSGQGVPRSQSPWGPRQTIIHENYPNPNIRGFPARRQWRPPGPAMGHRRNGPFYRNQQIQRGPRWNSFTLEGKQAVRPGYPTYRRVYGSTARSNPPNYAGNSANLRRKPEGPNKNPMVTNVAPPGPKHGTVDQNENIQNPREKQVSQKERTVVPTRDPSGPWRNSQDYGINKSNYKLPQPEDNMLVPNFNSIDQRENSYYPRGESKRAPNSDGQTQTQIIPKGIVLEPRRIPYESETNQPELKHSAYQPVYTEGIPSPAKEHFPAGRNTWNQQEISPPFKEDPGRQEEHLPHLSHGSRVHVYYPDYNPYDPRENSPYLRSNTWYERDDSPNTMGQPENPHYPMNTPDPKETIPYNEEDPIDPTGDEHFPGQSRWDMEELSFKEDPTVRHYEGEQYTSNQPKEYLPYSLDNPSKPREDFLYGEFYPWNPEENFPSYNTAPTVSSPVESRGYYANNAVGQEESTMFPSWSSWDPRIQAQGQKEGRPYLNRNFWDQSTNLYKTPTSSPHQKENQPYSNNSPAGLQKNPTWHEGENLNYGMQITRLNSPERDHLAFPDLIPPDYPGGQKESHVFHLSQRGPCCAGGSMWPKNNPLALQDYTQSFGLAPGENPDTSIGYAEDSHIKYARQTVSPTSIVPGQRNSSEKILPGESQNPSPFKDDVSTLRRSTPCSVKSQLSQRGIMPLPEANSLQSKNTPCLTSDLGGDGNNVLEQIFEGNQLNERTVDLTPEQLVFGTPDKEPRPEGIPNEMQGNESERQQQRQSSILQLPCFGSKLANYHTSSIGTPSSLGRQDSFDGDPIMPTETPNSLAGLATGAQFQNINVDPLNEDEHTPFDSLQIGTNPQDQVQDCLLLQA.

Positions methionine 1 to alanine 38 are cleaved as a signal peptide. Serine 53 carries the phosphoserine modification. Disordered stretches follow at residues tyrosine 90–asparagine 347, tyrosine 374–lysine 513, threonine 543–glycine 587, and arginine 603–glutamine 662. Residues glutamine 128–threonine 148 show a composition bias toward pro residues. A phosphoserine mark is found at serine 191 and serine 216. The segment covering aspartate 223–lysine 234 has biased composition (basic and acidic residues). Composition is skewed to polar residues over residues serine 243–proline 303 and threonine 381–asparagine 395. 4 N-linked (GlcNAc...) asparagine glycosylation sites follow: asparagine 245, asparagine 252, asparagine 264, and asparagine 291. The propeptide occupies asparagine 277–glycine 514. Residues proline 431–threonine 442 are compositionally biased toward basic and acidic residues. Over residues tryptophan 453–lysine 467 the composition is skewed to polar residues. Residue asparagine 462 is glycosylated (N-linked (GlcNAc...) asparagine). A Hydroxyproline modification is found at proline 547. A compositionally biased stretch (basic and acidic residues) spans phenylalanine 570 to proline 582. Positions aspartate 666 to glutamate 669 are excised as a propeptide. Residues asparagine 787–proline 816 are compositionally biased toward polar residues. Disordered regions lie at residues asparagine 787–glutamate 820, threonine 921–serine 965, and valine 1020–glutamine 1049. The N-linked (GlcNAc...) asparagine glycan is linked to asparagine 929. The segment covering leucine 952–serine 965 has biased composition (polar residues). The N-linked (GlcNAc...) asparagine glycan is linked to asparagine 1040.

In terms of processing, proteolytically cleaved into several smaller polypeptides. Cleavage of N-terminal region of enamelin occurs soon after secretion. Phosphorylated by FAM20C in vitro. Expressed by secretory-phase ameloblasts. Intact enamelin and large-molecular-weight enamelins are limited to the most superficial layer of the developing enamel matrix, while low-molecular-weight enamelins are observed in deeper enamelin. Preferential localization among the crystallites in rod and interrod enamel.

It localises to the secreted. Its subcellular location is the extracellular space. The protein localises to the extracellular matrix. Its function is as follows. Involved in the mineralization and structural organization of enamel. Involved in the extension of enamel during the secretory stage of dental enamel formation. The protein is Enamelin (ENAM) of Sus scrofa (Pig).